A 183-amino-acid polypeptide reads, in one-letter code: Transcription factor E (183 aa).

The HTH TFE/IIEalpha-type domain maps to 4-97; that stretch reads YIELVRRYVY…SWSIKDEDIR (94 aa).

This sequence belongs to the TFE family. Monomer. Interaction with RNA polymerase subunits RpoF and RpoE is necessary for Tfe stimulatory transcription activity. Able to interact with Tbp and RNA polymerase in the absence of DNA promoter. Interacts both with the preinitiation and elongation complexes.

Functionally, transcription factor that plays a role in the activation of archaeal genes transcribed by RNA polymerase. Facilitates transcription initiation by enhancing TATA-box recognition by TATA-box-binding protein (Tbp), and transcription factor B (Tfb) and RNA polymerase recruitment. Not absolutely required for transcription in vitro, but particularly important in cases where Tbp or Tfb function is not optimal. It dynamically alters the nucleic acid-binding properties of RNA polymerases by stabilizing the initiation complex and destabilizing elongation complexes. Seems to translocate with the RNA polymerase following initiation and acts by binding to the non template strand of the transcription bubble in elongation complexes. The chain is Transcription factor E from Caldivirga maquilingensis (strain ATCC 700844 / DSM 13496 / JCM 10307 / IC-167).